Here is a 168-residue protein sequence, read N- to C-terminus: Protein-export protein SecB (168 aa).

A disordered region spans residues 1-21 (MADQPSGNNDAKQAETNGNTV).

This sequence belongs to the SecB family. As to quaternary structure, homotetramer, a dimer of dimers. One homotetramer interacts with 1 SecA dimer.

Its subcellular location is the cytoplasm. In terms of biological role, one of the proteins required for the normal export of preproteins out of the cell cytoplasm. It is a molecular chaperone that binds to a subset of precursor proteins, maintaining them in a translocation-competent state. It also specifically binds to its receptor SecA. This is Protein-export protein SecB from Chelativorans sp. (strain BNC1).